The following is a 162-amino-acid chain: NADH-quinone oxidoreductase subunit I (162 aa).

4Fe-4S ferredoxin-type domains are found at residues 52–82 (LRRYPNGEERCIACKLCEAICPAQAITIEAG) and 93–122 (TRYDIDMVKCIYCGMCQEACPVDAIVEGPN). Positions 62, 65, 68, 72, 102, 105, 108, and 112 each coordinate [4Fe-4S] cluster.

This sequence belongs to the complex I 23 kDa subunit family. In terms of assembly, NDH-1 is composed of 14 different subunits. Subunits NuoA, H, J, K, L, M, N constitute the membrane sector of the complex. [4Fe-4S] cluster serves as cofactor.

The protein localises to the cell inner membrane. It catalyses the reaction a quinone + NADH + 5 H(+)(in) = a quinol + NAD(+) + 4 H(+)(out). In terms of biological role, NDH-1 shuttles electrons from NADH, via FMN and iron-sulfur (Fe-S) centers, to quinones in the respiratory chain. The immediate electron acceptor for the enzyme in this species is believed to be ubiquinone. Couples the redox reaction to proton translocation (for every two electrons transferred, four hydrogen ions are translocated across the cytoplasmic membrane), and thus conserves the redox energy in a proton gradient. The sequence is that of NADH-quinone oxidoreductase subunit I from Methylorubrum populi (strain ATCC BAA-705 / NCIMB 13946 / BJ001) (Methylobacterium populi).